The following is a 72-amino-acid chain: MKNSESIKEFKKLNSSEINEKIDQLRKDLFDLRFKQATRQLNETHQFKIIKKQVAQLLTLSKSQSNSQKSSD.

The protein belongs to the universal ribosomal protein uL29 family.

The chain is Large ribosomal subunit protein uL29 from Prochlorococcus marinus (strain MIT 9515).